The sequence spans 541 residues: Atrial natriuretic peptide receptor 3 (541 aa).

The first 26 residues, 1-26 (MPSLLVLTFSPCVLLGWALLAGGTGG), serve as a signal peptide directing secretion. Topologically, residues 27-481 (GGVGGGGGGA…PCKSSGGLEE (455 aa)) are extracellular. N-linked (GlcNAc...) (complex) asparagine glycosylation is present at Asn-86. 3 residues coordinate chloride: Ser-106, Val-135, and Cys-136. 2 disulfides stabilise this stretch: Cys-108/Cys-136 and Cys-213/Cys-261. Asn-293 carries an N-linked (GlcNAc...) (high mannose) asparagine glycan. A glycan (N-linked (GlcNAc...) (complex) asparagine) is linked at Asn-394. The chain crosses the membrane as a helical span at residues 482-504 (SAVTGIVVGALLGAGLLMAFYFF). Residues 505–541 (RKKYRITIERRTQQEESNLGKHRELREDSIRSHFSVA) lie on the Cytoplasmic side of the membrane.

Belongs to the ANF receptor family. As to quaternary structure, homodimer; disulfide-linked. Dimers can also be formed through the C-terminal cysteine of isoform 2. Interacts with OSTN.

Its subcellular location is the cell membrane. In terms of biological role, receptor for the natriuretic peptide hormones, binding with similar affinities atrial natriuretic peptide NPPA/ANP, brain natriuretic peptide NPPB/BNP, and C-type natriuretic peptide NPPC/CNP. May function as a clearance receptor for NPPA, NPPB and NPPC, regulating their local concentrations and effects. Acts as a regulator of osteoblast differentiation and bone growth by binding to its ligand osteocrin, thereby preventing binding between NPR3/NPR-C and natriuretic peptides, leading to increase cGMP production. The sequence is that of Atrial natriuretic peptide receptor 3 (NPR3) from Homo sapiens (Human).